We begin with the raw amino-acid sequence, 388 residues long: 5-hydroxytryptamine receptor 4 (388 aa).

Topologically, residues methionine 1–lysine 19 are extracellular. N-linked (GlcNAc...) asparagine glycosylation is present at asparagine 7. The chain crosses the membrane as a helical span at residues valine 20–valine 44. At cysteine 45–lysine 54 the chain is on the cytoplasmic side. The chain crosses the membrane as a helical span at residues threonine 55–alanine 78. Residues isoleucine 79 to phenylalanine 92 are Extracellular-facing. The chain crosses the membrane as a helical span at residues cysteine 93 to aspartate 117. Cysteine 93 and cysteine 184 are joined by a disulfide. Aspartate 100 is a serotonin binding site. The Cytoplasmic portion of the chain corresponds to arginine 118–methionine 133. The chain crosses the membrane as a helical span at residues threonine 134–isoleucine 157. At methionine 158–valine 188 the chain is on the extracellular side. A helical transmembrane segment spans residues asparagine 189–tyrosine 212. Topologically, residues tyrosine 213 to alanine 257 are cytoplasmic. The helical transmembrane segment at alanine 258–proline 283 threads the bilayer. Residue asparagine 279 participates in serotonin binding. Topologically, residues phenylalanine 284–proline 290 are extracellular. Residues glycine 291 to phenylalanine 314 traverse the membrane as a helical segment. At leucine 315–threonine 388 the chain is on the cytoplasmic side.

It belongs to the G-protein coupled receptor 1 family. In terms of assembly, interacts (via C-terminus 330-346 AA) with GRK5; this interaction is promoted by 5-HT (serotonin).

It localises to the cell membrane. The protein localises to the endosome membrane. Its function is as follows. G-protein coupled receptor for 5-hydroxytryptamine (serotonin), a biogenic hormone that functions as a neurotransmitter, a hormone and a mitogen. Ligand binding causes a conformation change that triggers signaling via guanine nucleotide-binding proteins (G proteins) and modulates the activity of downstream effectors. HTR4 is coupled to G(s) G alpha proteins and mediates activation of adenylate cyclase activity. The polypeptide is 5-hydroxytryptamine receptor 4 (HTR4) (Cavia porcellus (Guinea pig)).